The sequence spans 127 residues: UPF0102 protein Cpha266_0037 (127 aa).

This sequence belongs to the UPF0102 family.

This Chlorobium phaeobacteroides (strain DSM 266 / SMG 266 / 2430) protein is UPF0102 protein Cpha266_0037.